The chain runs to 535 residues: Beta-amylase 1, chloroplastic (535 aa).

A chloroplast-targeting transit peptide spans 1–36; it reads MALNLAQSAAAAACFATAGDARRAASVVAMPSSSSS. Substrate-binding residues include Asp115, His155, and Asp163. The Proton donor role is filled by Glu247. Positions 361, 366, and 408 each coordinate substrate. Glu446 serves as the catalytic Proton acceptor. Substrate-binding positions include 447 to 448 and Arg480; that span reads NA.

This sequence belongs to the glycosyl hydrolase 14 family.

The protein localises to the plastid. It is found in the chloroplast. It carries out the reaction Hydrolysis of (1-&gt;4)-alpha-D-glucosidic linkages in polysaccharides so as to remove successive maltose units from the non-reducing ends of the chains.. Possesses beta-amylase activity in vitro. May be involved in cold resistance by mediating the accumulation of maltose upon freezing stress, thus contributing to the protection of membranes. The sequence is that of Beta-amylase 1, chloroplastic from Oryza sativa subsp. japonica (Rice).